A 772-amino-acid polypeptide reads, in one-letter code: Acyl-homoserine lactone acylase PvdQ (772 aa).

The signal sequence occupies residues 1–28 (MPVFPFCRPMTCAGLAAALVAFSVGVQA). The propeptide at 199 to 220 (AQSSAGFASALARQERFAAERG) is spacer peptide. The active-site Nucleophile is S221.

Belongs to the peptidase S45 family. Heterodimer of an alpha subunit and a beta subunit processed from the same precursor.

It is found in the periplasm. The enzyme catalyses an N-acyl-L-homoserine lactone + H2O = L-homoserine lactone + a carboxylate. In terms of biological role, catalyzes the deacylation of acyl-homoserine lactone (AHL or acyl-HSL), releasing homoserine lactone (HSL) and the corresponding fatty acid. Possesses a specificity for the degradation of long-chain acyl-HSLs (side chains of 11 to 14 carbons in length). In Pseudomonas putida (strain ATCC 47054 / DSM 6125 / CFBP 8728 / NCIMB 11950 / KT2440), this protein is Acyl-homoserine lactone acylase PvdQ (pvdQ).